The following is a 522-amino-acid chain: Protein nucleotidyltransferase YdiU (522 aa).

ATP-binding residues include G109, G111, R112, K132, D144, G145, R195, and R202. The active-site Proton acceptor is D271. Mg(2+)-binding residues include N272 and D281. Residue D281 participates in ATP binding.

The protein belongs to the SELO family. The cofactor is Mg(2+). Requires Mn(2+) as cofactor.

It carries out the reaction L-seryl-[protein] + ATP = 3-O-(5'-adenylyl)-L-seryl-[protein] + diphosphate. The enzyme catalyses L-threonyl-[protein] + ATP = 3-O-(5'-adenylyl)-L-threonyl-[protein] + diphosphate. It catalyses the reaction L-tyrosyl-[protein] + ATP = O-(5'-adenylyl)-L-tyrosyl-[protein] + diphosphate. The catalysed reaction is L-histidyl-[protein] + UTP = N(tele)-(5'-uridylyl)-L-histidyl-[protein] + diphosphate. It carries out the reaction L-seryl-[protein] + UTP = O-(5'-uridylyl)-L-seryl-[protein] + diphosphate. The enzyme catalyses L-tyrosyl-[protein] + UTP = O-(5'-uridylyl)-L-tyrosyl-[protein] + diphosphate. In terms of biological role, nucleotidyltransferase involved in the post-translational modification of proteins. It can catalyze the addition of adenosine monophosphate (AMP) or uridine monophosphate (UMP) to a protein, resulting in modifications known as AMPylation and UMPylation. This Burkholderia multivorans (strain ATCC 17616 / 249) protein is Protein nucleotidyltransferase YdiU.